The primary structure comprises 598 residues: IQ calmodulin-binding motif-containing protein 1 (598 aa).

Residues 1 to 157 (MKPAGTDPRI…SLFWLLGGHV (157 aa)) are interaction with BBS1, BBS8 and BBS9. An interaction with CEP290, BBS1, BBS2, BBS4, BBS5, BBS7, BBS8 and BBS9 region spans residues 287–598 (QEVEEQKLHK…MLFIGGTKPP (312 aa)). IQ domains lie at 294 to 317 (LHKA…LKKL), 318 to 338 (PSAV…MMLE), 387 to 416 (EEKS…SLTE), and 417 to 437 (YKAA…CRKK). Residues 336–362 (MLELNRQKEEEDLRLKLQLQRQRAMRL) are a coiled coil. The segment at 530–598 (AEGKEPEQFL…MLFIGGTKPP (69 aa)) is interaction with BBS1, BBS2, BBS4, BBS7, BBS8 and BBS9.

Interacts with calmodulin. Interacts with CEP290/NPHP6; IQCB1/NPHP5 and CEP290/NPHP6; are proposed to form a functional NPHP5-6 module localized to the centrosome. Interacts with ATXN10. Interacts with NPHP1, INVS, NPHP4 and RPGRIP1L; these interactions likely require additional interactors. Associates with the BBSome complex; interacts with BBS1, BBS2, BBS4, BBS5, BBS7, BBS8 and BBS9. In terms of tissue distribution, localized to the outer segment and connecting cilia of photoreceptor cells.

It is found in the cytoplasm. Its subcellular location is the cytoskeleton. It localises to the microtubule organizing center. The protein localises to the centrosome. Involved in ciliogenesis. The function in an early step in cilia formation depends on its association with CEP290/NPHP6. Involved in regulation of the BBSome complex integrity, specifically for presence of BBS2 and BBS5 in the complex, and in ciliary targeting of selected BBSome cargos. May play a role in controlling entry of the BBSome complex to cilia possibly implicating CEP290/NPHP6. The polypeptide is IQ calmodulin-binding motif-containing protein 1 (Iqcb1) (Mus musculus (Mouse)).